Here is a 288-residue protein sequence, read N- to C-terminus: Diaminopimelate epimerase (288 aa).

Positions 14 and 67 each coordinate substrate. Residue cysteine 76 is the Proton donor of the active site. Substrate is bound by residues 77–78 (GN), asparagine 166, asparagine 199, and 217–218 (ER). Cysteine 226 (proton acceptor) is an active-site residue. 227–228 (GT) contributes to the substrate binding site.

It belongs to the diaminopimelate epimerase family. As to quaternary structure, homodimer.

It localises to the cytoplasm. It catalyses the reaction (2S,6S)-2,6-diaminopimelate = meso-2,6-diaminopimelate. It participates in amino-acid biosynthesis; L-lysine biosynthesis via DAP pathway; DL-2,6-diaminopimelate from LL-2,6-diaminopimelate: step 1/1. Its function is as follows. Catalyzes the stereoinversion of LL-2,6-diaminopimelate (L,L-DAP) to meso-diaminopimelate (meso-DAP), a precursor of L-lysine and an essential component of the bacterial peptidoglycan. This chain is Diaminopimelate epimerase, found in Bacillus cereus (strain 03BB102).